Consider the following 103-residue polypeptide: Large ribosomal subunit protein bL21 (103 aa).

This sequence belongs to the bacterial ribosomal protein bL21 family. As to quaternary structure, part of the 50S ribosomal subunit. Contacts protein L20.

This protein binds to 23S rRNA in the presence of protein L20. This chain is Large ribosomal subunit protein bL21, found in Enterobacter sp. (strain 638).